The chain runs to 126 residues: Nucleoside diphosphate kinase B (126 aa).

ATP-binding residues include Lys-6, Phe-37, Thr-68, Arg-79, and Asn-89. Catalysis depends on His-92, which acts as the Pros-phosphohistidine intermediate.

Belongs to the NDK family. Requires Mg(2+) as cofactor.

It localises to the cytoplasm. The protein localises to the nucleus. The protein resides in the cell projection. It is found in the lamellipodium. Its subcellular location is the ruffle. It catalyses the reaction a 2'-deoxyribonucleoside 5'-diphosphate + ATP = a 2'-deoxyribonucleoside 5'-triphosphate + ADP. The enzyme catalyses a ribonucleoside 5'-diphosphate + ATP = a ribonucleoside 5'-triphosphate + ADP. In terms of biological role, major role in the synthesis of nucleoside triphosphates other than ATP. The sequence is that of Nucleoside diphosphate kinase B (nme2) from Merluccius capensis (Shallow-water Cape hake).